Consider the following 365-residue polypeptide: MKVTILASAILALINGALALPANTPTLDVTLTQVDNTRIKATVKNTGNEKVTFVHLNFFQDAAPVKKVSLFRNGTEVEFTGIKRRLLTEGLSDDGLTTLAPGGTFEDEFDVASTGDLTEGGTVTIRTDGFVPITTDRKVSGYIPYQSNELEIEVDPAKAAAVPQAIKLLDRRTKVASCSGSRASALSTALRNAGSLANAAASAASSGSSTRFQEYFKTTSRRPENVGGRFRAVGREASSQSSGKTTYYCNDPYGYCDSNTLAYTLPSSNLIANCDIYYSYLPALTSSCHAQDQATTTLHEFTHAPAVYSPGTDDYAYGYRASTALSASQALLNADTYALFANGSPLLPLSNHSKCRNTMVWRTLL.

A signal peptide spans Met-1–Ala-19. The propeptide occupies Leu-20–Arg-172. A glycan (N-linked (GlcNAc...) asparagine) is linked at Asn-73. 2 cysteine pairs are disulfide-bonded: Cys-178/Cys-249 and Cys-256/Cys-274. His-299 is a binding site for Zn(2+). Residue Glu-300 is part of the active site. His-303 and Asp-314 together coordinate Zn(2+). N-linked (GlcNAc...) asparagine glycosylation is present at Asn-351.

Belongs to the peptidase M35 family. The cofactor is Zn(2+).

It is found in the secreted. It catalyses the reaction Preferential cleavage of bonds with hydrophobic residues in P1'. Also 3-Asn-|-Gln-4 and 8-Gly-|-Ser-9 bonds in insulin B chain.. Functionally, secreted metalloproteinase that allows assimilation of proteinaceous substrates. Shows high activities on basic nuclear substrates such as histone and protamine. May be involved in virulence. This chain is Neutral protease 2 homolog mep20 (mep20), found in Aspergillus fumigatus (Neosartorya fumigata).